The following is a 177-amino-acid chain: Large ribosomal subunit protein uL6 (177 aa).

The protein belongs to the universal ribosomal protein uL6 family. In terms of assembly, part of the 50S ribosomal subunit.

In terms of biological role, this protein binds to the 23S rRNA, and is important in its secondary structure. It is located near the subunit interface in the base of the L7/L12 stalk, and near the tRNA binding site of the peptidyltransferase center. The polypeptide is Large ribosomal subunit protein uL6 (Rhizobium etli (strain ATCC 51251 / DSM 11541 / JCM 21823 / NBRC 15573 / CFN 42)).